Consider the following 301-residue polypeptide: Glycine--tRNA ligase alpha subunit (301 aa).

Belongs to the class-II aminoacyl-tRNA synthetase family. Tetramer of two alpha and two beta subunits.

The protein localises to the cytoplasm. It catalyses the reaction tRNA(Gly) + glycine + ATP = glycyl-tRNA(Gly) + AMP + diphosphate. The chain is Glycine--tRNA ligase alpha subunit from Shewanella halifaxensis (strain HAW-EB4).